Reading from the N-terminus, the 286-residue chain is Bifunctional protein FolD (286 aa).

NADP(+)-binding positions include Gly-166–Ser-168 and Ser-191.

The protein belongs to the tetrahydrofolate dehydrogenase/cyclohydrolase family. Homodimer.

It carries out the reaction (6R)-5,10-methylene-5,6,7,8-tetrahydrofolate + NADP(+) = (6R)-5,10-methenyltetrahydrofolate + NADPH. The enzyme catalyses (6R)-5,10-methenyltetrahydrofolate + H2O = (6R)-10-formyltetrahydrofolate + H(+). The protein operates within one-carbon metabolism; tetrahydrofolate interconversion. Functionally, catalyzes the oxidation of 5,10-methylenetetrahydrofolate to 5,10-methenyltetrahydrofolate and then the hydrolysis of 5,10-methenyltetrahydrofolate to 10-formyltetrahydrofolate. The chain is Bifunctional protein FolD from Lactiplantibacillus plantarum (strain ATCC BAA-793 / NCIMB 8826 / WCFS1) (Lactobacillus plantarum).